The primary structure comprises 840 residues: Phosphatidylglycerol lysyltransferase (840 aa).

Topologically, residues 1-8 are cytoplasmic; it reads MNQEVKNK. A helical transmembrane segment spans residues 9-29; that stretch reads IFSILKITFATALFIFVVITL. The Extracellular segment spans residues 30-52; sequence YRELSGINFKDTLVEFSKINRMS. The helical transmembrane segment at 53-73 threads the bilayer; sequence LVLLFIGGGASLVILSMYDVI. The Cytoplasmic portion of the chain corresponds to 74 to 89; that stretch reads LSRALKMDISLGKVLR. A helical membrane pass occupies residues 90 to 110; sequence VSYIINALNAIVGFGGFIGAG. Over 111-128 the chain is Extracellular; it reads VRAMVYKNYTHDKKKLVH. A helical membrane pass occupies residues 129–149; that stretch reads FISLILISMLTGLSLLSLLIV. Topologically, residues 150-161 are cytoplasmic; the sequence is FHVFDASLILNK. The helical transmembrane segment at 162–182 threads the bilayer; it reads ITWVRWVLYAVSLFLPLFIIY. The Extracellular portion of the chain corresponds to 183-200; sequence SMVRPPDKNNRYVGLYCT. Residues 201–221 traverse the membrane as a helical segment; it reads LVSCVEWLAAAVVLYFCGVIV. The Cytoplasmic segment spans residues 222-229; sequence DVHVSFMS. A helical membrane pass occupies residues 230–250; it reads FIAIFIIAALSGLVSFIPGGF. Residues 251–271 are Extracellular-facing; sequence GAFDLVVLLGFKTLGVPEEKV. The chain crosses the membrane as a helical span at residues 272–292; the sequence is LLMLLLYRFAYYFVPVIIALI. The Cytoplasmic segment spans residues 293 to 337; that stretch reads LSSFEFGTSAKKYIEGSKYFIPAKDVTSFLMSYQKDIIAKIPSLS. The chain crosses the membrane as a helical span at residues 338–358; the sequence is LAILVFFTSMIFFVNNLTIVY. Over 359–369 the chain is Extracellular; that stretch reads DALYDGNHLTY. Residues 370-390 form a helical membrane-spanning segment; sequence YLLLAIHTSACLLLLLNVVGI. Residues 391-394 lie on the Cytoplasmic side of the membrane; that stretch reads YKQS. The next 2 helical transmembrane spans lie at 395–415 and 416–436; these read RRAI…TLFT and YASY…IVAF. The Cytoplasmic portion of the chain corresponds to 437-450; that stretch reads RRARRLKRPIRMRN. Residues 451–471 form a helical membrane-spanning segment; the sequence is LVAMLLFSIFILYINHIFIAG. At 472–489 the chain is on the extracellular side; it reads TFYALDVYTIEMHTSVLK. The helical transmembrane segment at 490–510 threads the bilayer; the sequence is YYFWITILIIAIIVGAIAWLF. Over 511–840 the chain is Cytoplasmic; it reads DYQFSKVRIS…SKVMRVIRHK (330 aa).

The protein belongs to the LPG synthase family.

It is found in the cell membrane. The catalysed reaction is L-lysyl-tRNA(Lys) + a 1,2-diacyl-sn-glycero-3-phospho-(1'-sn-glycerol) = a 1,2-diacyl-sn-glycero-3-phospho-1'-(3'-O-L-lysyl)-sn-glycerol + tRNA(Lys). Catalyzes the transfer of a lysyl group from L-lysyl-tRNA(Lys) to membrane-bound phosphatidylglycerol (PG), which produces lysylphosphatidylglycerol (LPG), a major component of the bacterial membrane with a positive net charge. LPG synthesis contributes to bacterial virulence as it is involved in the resistance mechanism against cationic antimicrobial peptides (CAMP) produces by the host's immune system (defensins, cathelicidins) and by the competing microorganisms (bacteriocins). In fact, the modification of anionic phosphatidylglycerol with positively charged L-lysine results in repulsion of the peptides. The protein is Phosphatidylglycerol lysyltransferase (mprF) of Staphylococcus aureus (strain MRSA252).